The following is a 362-amino-acid chain: Chorismate synthase (362 aa).

R48 and R54 together coordinate NADP(+). FMN contacts are provided by residues 131-133 (RSS), 243-244 (NA), G287, 302-306 (KPTSS), and R328.

Belongs to the chorismate synthase family. As to quaternary structure, homotetramer. It depends on FMNH2 as a cofactor.

It catalyses the reaction 5-O-(1-carboxyvinyl)-3-phosphoshikimate = chorismate + phosphate. Its pathway is metabolic intermediate biosynthesis; chorismate biosynthesis; chorismate from D-erythrose 4-phosphate and phosphoenolpyruvate: step 7/7. Catalyzes the anti-1,4-elimination of the C-3 phosphate and the C-6 proR hydrogen from 5-enolpyruvylshikimate-3-phosphate (EPSP) to yield chorismate, which is the branch point compound that serves as the starting substrate for the three terminal pathways of aromatic amino acid biosynthesis. This reaction introduces a second double bond into the aromatic ring system. This Rhodopseudomonas palustris (strain ATCC BAA-98 / CGA009) protein is Chorismate synthase.